A 50-amino-acid polypeptide reads, in one-letter code: MGKKSKASKKRLAKLERQNSRVPAWVMMKTNRDVQRNPKRRNWRRNDTDE.

The span at 1–12 (MGKKSKASKKRL) shows a compositional bias: basic residues. Disordered stretches follow at residues 1–20 (MGKK…RQNS) and 30–50 (TNRD…DTDE).

The protein belongs to the eukaryotic ribosomal protein eL39 family.

In Halobacterium salinarum (strain ATCC 700922 / JCM 11081 / NRC-1) (Halobacterium halobium), this protein is Large ribosomal subunit protein eL39 (rpl39e).